The chain runs to 367 residues: Phosphoribosylaminoimidazole-succinocarboxamide synthase (367 aa).

It belongs to the SAICAR synthetase family.

It catalyses the reaction 5-amino-1-(5-phospho-D-ribosyl)imidazole-4-carboxylate + L-aspartate + ATP = (2S)-2-[5-amino-1-(5-phospho-beta-D-ribosyl)imidazole-4-carboxamido]succinate + ADP + phosphate + 2 H(+). The protein operates within purine metabolism; IMP biosynthesis via de novo pathway; 5-amino-1-(5-phospho-D-ribosyl)imidazole-4-carboxamide from 5-amino-1-(5-phospho-D-ribosyl)imidazole-4-carboxylate: step 1/2. The protein is Phosphoribosylaminoimidazole-succinocarboxamide synthase of Aliivibrio salmonicida (strain LFI1238) (Vibrio salmonicida (strain LFI1238)).